A 213-amino-acid chain; its full sequence is Uridine kinase (213 aa).

14 to 21 provides a ligand contact to ATP; it reads GASASGKS.

Belongs to the uridine kinase family.

Its subcellular location is the cytoplasm. It catalyses the reaction uridine + ATP = UMP + ADP + H(+). The catalysed reaction is cytidine + ATP = CMP + ADP + H(+). It participates in pyrimidine metabolism; CTP biosynthesis via salvage pathway; CTP from cytidine: step 1/3. Its pathway is pyrimidine metabolism; UMP biosynthesis via salvage pathway; UMP from uridine: step 1/1. This Vibrio vulnificus (strain CMCP6) protein is Uridine kinase.